Reading from the N-terminus, the 185-residue chain is MAAYNKADLERRMKGAVESLKSDFSGLRTGRASTSLLDPVTVDVYGANMPLNQVATVSVPEPRMITVQVWDKSNVTPVDKAIRSAGLGLNPVVDGQMLRLPIPDLTEERRKELAKLVGQYSEKARIAVRNVRRDGNDQIKQDEKKNEISEDEKKRFENEVQKLTDKTIADIDALAVHKEKEILGK.

This sequence belongs to the RRF family.

The protein resides in the cytoplasm. In terms of biological role, responsible for the release of ribosomes from messenger RNA at the termination of protein biosynthesis. May increase the efficiency of translation by recycling ribosomes from one round of translation to another. The polypeptide is Ribosome-recycling factor (Zymomonas mobilis subsp. mobilis (strain ATCC 31821 / ZM4 / CP4)).